A 43-amino-acid polypeptide reads, in one-letter code: Potassium channel toxin gamma-KTx 4.13 (43 aa).

4 disulfides stabilise this stretch: cysteine 5–cysteine 23, cysteine 11–cysteine 34, cysteine 20–cysteine 39, and cysteine 24–cysteine 41.

Belongs to the ergtoxin family. Gamma-KTx 4 subfamily. Expressed by the venom gland.

Its subcellular location is the secreted. Its function is as follows. Reversibly blocks Kv11/ERG potassium channels. The polypeptide is Potassium channel toxin gamma-KTx 4.13 (Centruroides noxius (Mexican scorpion)).